The chain runs to 437 residues: Adenylosuccinate synthetase (437 aa).

Residues 12–18 (GDEGKGK) and 40–42 (GHT) contribute to the GTP site. Residue Asp13 is the Proton acceptor of the active site. Positions 13 and 40 each coordinate Mg(2+). IMP contacts are provided by residues 13-16 (DEGK), 38-41 (NAGH), Thr128, Arg142, Gln223, Thr238, and Arg302. The active-site Proton donor is His41. Position 298-304 (298-304 (TTTGRRR)) interacts with substrate. GTP is bound by residues Arg304, 330-332 (KLD), and 412-414 (SLG).

It belongs to the adenylosuccinate synthetase family. As to quaternary structure, homodimer. It depends on Mg(2+) as a cofactor.

Its subcellular location is the cytoplasm. The enzyme catalyses IMP + L-aspartate + GTP = N(6)-(1,2-dicarboxyethyl)-AMP + GDP + phosphate + 2 H(+). It participates in purine metabolism; AMP biosynthesis via de novo pathway; AMP from IMP: step 1/2. Its function is as follows. Plays an important role in the de novo pathway of purine nucleotide biosynthesis. Catalyzes the first committed step in the biosynthesis of AMP from IMP. The polypeptide is Adenylosuccinate synthetase (Prochlorococcus marinus (strain MIT 9313)).